The following is a 139-amino-acid chain: Large ribosomal subunit protein uL16 (139 aa).

Over residues 1-17 (MLQPKRTKYRKQQKGRM) the composition is skewed to basic residues. The segment at 1–25 (MLQPKRTKYRKQQKGRMKGLSQRGH) is disordered.

Belongs to the universal ribosomal protein uL16 family. Part of the 50S ribosomal subunit.

Functionally, binds 23S rRNA and is also seen to make contacts with the A and possibly P site tRNAs. The chain is Large ribosomal subunit protein uL16 from Christiangramia forsetii (strain DSM 17595 / CGMCC 1.15422 / KT0803) (Gramella forsetii).